Consider the following 341-residue polypeptide: tRNA N6-adenosine threonylcarbamoyltransferase (341 aa).

Residues histidine 111 and histidine 115 each contribute to the Fe cation site. Substrate contacts are provided by residues 133–137, aspartate 166, glycine 179, aspartate 183, and asparagine 273; that span reads AVSGG. Aspartate 301 contributes to the Fe cation binding site.

The protein belongs to the KAE1 / TsaD family. The cofactor is Fe(2+).

The protein resides in the cytoplasm. The catalysed reaction is L-threonylcarbamoyladenylate + adenosine(37) in tRNA = N(6)-L-threonylcarbamoyladenosine(37) in tRNA + AMP + H(+). Required for the formation of a threonylcarbamoyl group on adenosine at position 37 (t(6)A37) in tRNAs that read codons beginning with adenine. Is involved in the transfer of the threonylcarbamoyl moiety of threonylcarbamoyl-AMP (TC-AMP) to the N6 group of A37, together with TsaE and TsaB. TsaD likely plays a direct catalytic role in this reaction. The sequence is that of tRNA N6-adenosine threonylcarbamoyltransferase from Geotalea daltonii (strain DSM 22248 / JCM 15807 / FRC-32) (Geobacter daltonii).